The chain runs to 293 residues: Pseudouridine-5'-phosphate glycosidase (293 aa).

Residue Glu21 is the Proton donor of the active site. Positions 81 and 101 each coordinate substrate. Asp130 serves as a coordination point for Mn(2+). 132–134 (SQD) is a binding site for substrate. Residue Lys151 is the Nucleophile of the active site.

This sequence belongs to the pseudouridine-5'-phosphate glycosidase family. In terms of assembly, homotrimer. Mn(2+) serves as cofactor.

It carries out the reaction D-ribose 5-phosphate + uracil = psi-UMP + H2O. Functionally, catalyzes the reversible cleavage of pseudouridine 5'-phosphate (PsiMP) to ribose 5-phosphate and uracil. Functions biologically in the cleavage direction, as part of a pseudouridine degradation pathway. The protein is Pseudouridine-5'-phosphate glycosidase of Thermosipho africanus (strain TCF52B).